Reading from the N-terminus, the 48-residue chain is uncharacterized protein (48 aa).

A helical membrane pass occupies residues Ile-20–His-37.

Its subcellular location is the membrane. This is an uncharacterized protein from Saccharomyces cerevisiae (strain ATCC 204508 / S288c) (Baker's yeast).